The primary structure comprises 202 residues: Flagellar transcriptional regulator FlhC (202 aa).

Positions 137, 140, 157, and 160 each coordinate Zn(2+).

This sequence belongs to the FlhC family. As to quaternary structure, heterohexamer composed of two FlhC and four FlhD subunits. Each FlhC binds a FlhD dimer, forming a heterotrimer, and a hexamer assembles by dimerization of two heterotrimers. Zn(2+) is required as a cofactor.

The protein localises to the cytoplasm. Functions in complex with FlhD as a master transcriptional regulator that regulates transcription of several flagellar and non-flagellar operons by binding to their promoter region. Activates expression of class 2 flagellar genes, including fliA, which is a flagellum-specific sigma factor that turns on the class 3 genes. Also regulates genes whose products function in a variety of physiological pathways. This Variovorax paradoxus (strain S110) protein is Flagellar transcriptional regulator FlhC.